The following is a 365-amino-acid chain: Histidinol-phosphate aminotransferase (365 aa).

At lysine 223 the chain carries N6-(pyridoxal phosphate)lysine.

It belongs to the class-II pyridoxal-phosphate-dependent aminotransferase family. Histidinol-phosphate aminotransferase subfamily. In terms of assembly, homodimer. Requires pyridoxal 5'-phosphate as cofactor.

It catalyses the reaction L-histidinol phosphate + 2-oxoglutarate = 3-(imidazol-4-yl)-2-oxopropyl phosphate + L-glutamate. Its pathway is amino-acid biosynthesis; L-histidine biosynthesis; L-histidine from 5-phospho-alpha-D-ribose 1-diphosphate: step 7/9. This is Histidinol-phosphate aminotransferase from Brucella melitensis biotype 1 (strain ATCC 23456 / CCUG 17765 / NCTC 10094 / 16M).